Reading from the N-terminus, the 640-residue chain is Threonine--tRNA ligase (640 aa).

The TGS domain occupies 1 to 61 (MPIITLPDGS…DRDATLQIIT (61 aa)). The segment at 242-533 (DHRRIGKQLD…LIEHYAGAFP (292 aa)) is catalytic. Zn(2+) is bound by residues Cys-333, His-384, and His-510.

This sequence belongs to the class-II aminoacyl-tRNA synthetase family. In terms of assembly, homodimer. It depends on Zn(2+) as a cofactor.

It is found in the cytoplasm. The enzyme catalyses tRNA(Thr) + L-threonine + ATP = L-threonyl-tRNA(Thr) + AMP + diphosphate + H(+). Its function is as follows. Catalyzes the attachment of threonine to tRNA(Thr) in a two-step reaction: L-threonine is first activated by ATP to form Thr-AMP and then transferred to the acceptor end of tRNA(Thr). Also edits incorrectly charged L-seryl-tRNA(Thr). The polypeptide is Threonine--tRNA ligase (Pseudomonas aeruginosa (strain LESB58)).